The sequence spans 64 residues: Small ribosomal subunit protein eS17 (64 aa).

This sequence belongs to the eukaryotic ribosomal protein eS17 family.

The sequence is that of Small ribosomal subunit protein eS17 from Methanocorpusculum labreanum (strain ATCC 43576 / DSM 4855 / Z).